The primary structure comprises 69 residues: MKAREIRELTNEELLQKLSDLKAELFNLRFQLATGQLDNPMRIRDVRKTIARIKTILRERELGIRQNKA.

This sequence belongs to the universal ribosomal protein uL29 family.

The polypeptide is Large ribosomal subunit protein uL29 (Thermoanaerobacter pseudethanolicus (strain ATCC 33223 / 39E) (Clostridium thermohydrosulfuricum)).